A 512-amino-acid polypeptide reads, in one-letter code: Photosystem II CP47 reaction center protein (512 aa).

The next 6 membrane-spanning stretches (helical) occupy residues 21-36 (AVHLMHTALVSGWAGS), 101-115 (IVLSGLLFLAAIWHW), 140-156 (GIHLFLSGVLCFAFGAF), 203-218 (IAAGILGILAGLFHLS), 237-252 (VLSSSIAAVFFAAFVV), and 457-472 (TFALLFFFGHIWHGAR).

The protein belongs to the PsbB/PsbC family. PsbB subfamily. As to quaternary structure, PSII is composed of 1 copy each of membrane proteins PsbA, PsbB, PsbC, PsbD, PsbE, PsbF, PsbH, PsbI, PsbJ, PsbK, PsbL, PsbM, PsbT, PsbX, PsbY, PsbZ, Psb30/Ycf12, at least 3 peripheral proteins of the oxygen-evolving complex and a large number of cofactors. It forms dimeric complexes. The cofactor is Binds multiple chlorophylls. PSII binds additional chlorophylls, carotenoids and specific lipids..

It is found in the plastid. The protein localises to the chloroplast thylakoid membrane. Its function is as follows. One of the components of the core complex of photosystem II (PSII). It binds chlorophyll and helps catalyze the primary light-induced photochemical processes of PSII. PSII is a light-driven water:plastoquinone oxidoreductase, using light energy to abstract electrons from H(2)O, generating O(2) and a proton gradient subsequently used for ATP formation. The chain is Photosystem II CP47 reaction center protein from Physcomitrium patens (Spreading-leaved earth moss).